A 194-amino-acid chain; its full sequence is MHNLIPTVIEHTGNYERVFDIYSRLLRERIIFLSGEINDLKADTVIAQLLFLESEDSNKDIYLYLNSPGGSITAGLAIYDTMQYIKPDVRTICIGQAASMGAFLLAGGAKGKRESLAYSRIMIHQPWGGISGQASDINIQANEILRLKKLIIDIMSNQIGIDKEKLALDMERDYFMTSNDALKYGLIDSILVRE.

The active-site Nucleophile is Ser-99. The active site involves His-124.

Belongs to the peptidase S14 family. As to quaternary structure, fourteen ClpP subunits assemble into 2 heptameric rings which stack back to back to give a disk-like structure with a central cavity, resembling the structure of eukaryotic proteasomes.

It is found in the cytoplasm. The enzyme catalyses Hydrolysis of proteins to small peptides in the presence of ATP and magnesium. alpha-casein is the usual test substrate. In the absence of ATP, only oligopeptides shorter than five residues are hydrolyzed (such as succinyl-Leu-Tyr-|-NHMec, and Leu-Tyr-Leu-|-Tyr-Trp, in which cleavage of the -Tyr-|-Leu- and -Tyr-|-Trp bonds also occurs).. In terms of biological role, cleaves peptides in various proteins in a process that requires ATP hydrolysis. Has a chymotrypsin-like activity. Plays a major role in the degradation of misfolded proteins. The sequence is that of ATP-dependent Clp protease proteolytic subunit from Borrelia garinii subsp. bavariensis (strain ATCC BAA-2496 / DSM 23469 / PBi) (Borreliella bavariensis).